The chain runs to 657 residues: DNA ligase (657 aa).

Residue Ser80–Leu81 coordinates NAD(+). The active-site N6-AMP-lysine intermediate is the Lys104. Positions 125, 159, and 297 each coordinate NAD(+). The Zn(2+) site is built by Cys386, Cys389, Cys406, and Cys411. The BRCT domain occupies Gln571 to Glu657.

This sequence belongs to the NAD-dependent DNA ligase family. LigA subfamily. The cofactor is Mg(2+). Requires Mn(2+) as cofactor.

It carries out the reaction NAD(+) + (deoxyribonucleotide)n-3'-hydroxyl + 5'-phospho-(deoxyribonucleotide)m = (deoxyribonucleotide)n+m + AMP + beta-nicotinamide D-nucleotide.. DNA ligase that catalyzes the formation of phosphodiester linkages between 5'-phosphoryl and 3'-hydroxyl groups in double-stranded DNA using NAD as a coenzyme and as the energy source for the reaction. It is essential for DNA replication and repair of damaged DNA. The polypeptide is DNA ligase (Ruminiclostridium cellulolyticum (strain ATCC 35319 / DSM 5812 / JCM 6584 / H10) (Clostridium cellulolyticum)).